The sequence spans 201 residues: Interferon-induced transmembrane protein 10 (201 aa).

Disordered stretches follow at residues Met1–Gln23 and Ala60–Ser88. Topologically, residues Met1–Tyr127 are extracellular. Residues Ala63–Ala73 are compositionally biased toward pro residues. A helical membrane pass occupies residues Leu128–Ala148. 2 S-palmitoyl cysteine lipidation sites follow: Cys140 and Cys141. Topologically, residues Tyr149 to Arg173 are cytoplasmic. Residues Leu174–Leu194 traverse the membrane as a helical segment. Over Arg195 to Tyr201 the chain is Extracellular.

It belongs to the CD225/Dispanin family.

Its subcellular location is the cell membrane. The protein is Interferon-induced transmembrane protein 10 (Ifitm10) of Mus musculus (Mouse).